The chain runs to 147 residues: Hemoglobin subunit delta (147 aa).

A Globin domain is found at 3-147 (NLTAAEKTQV…VANALAHKYH (145 aa)). Heme b is bound by residues His64 and His93.

This sequence belongs to the globin family. As to quaternary structure, heterotetramer of two delta chains and two alpha chains. As to expression, red blood cells.

In Loxodonta africana (African elephant), this protein is Hemoglobin subunit delta (HBD).